Consider the following 340-residue polypeptide: Phospho-N-acetylmuramoyl-pentapeptide-transferase (340 aa).

9 consecutive transmembrane segments (helical) span residues 24-44 (VPFGLSVLGSALLGSLLLPVL), 69-89 (TMGGLSFLPVGLLVAGIGSGW), 95-115 (AVALLTLAYTVVGWLDDWLVI), 129-149 (LLLQVGIGLVFCGYLAWQGIP), 156-176 (GIGALPLGWLFWPLALFVLVG), 196-216 (ALVLAGLGLTAADPVLALVAF), 235-255 (LFMGDTGSLGLGGALAGLALL), 260-280 (WALAWMGAVLVAEALSVILQV), and 316-336 (VVGCFYGLTALLVGLGWAWWH).

It belongs to the glycosyltransferase 4 family. MraY subfamily. Mg(2+) is required as a cofactor.

It localises to the cell inner membrane. It catalyses the reaction UDP-N-acetyl-alpha-D-muramoyl-L-alanyl-gamma-D-glutamyl-meso-2,6-diaminopimeloyl-D-alanyl-D-alanine + di-trans,octa-cis-undecaprenyl phosphate = di-trans,octa-cis-undecaprenyl diphospho-N-acetyl-alpha-D-muramoyl-L-alanyl-D-glutamyl-meso-2,6-diaminopimeloyl-D-alanyl-D-alanine + UMP. Its pathway is cell wall biogenesis; peptidoglycan biosynthesis. Catalyzes the initial step of the lipid cycle reactions in the biosynthesis of the cell wall peptidoglycan: transfers peptidoglycan precursor phospho-MurNAc-pentapeptide from UDP-MurNAc-pentapeptide onto the lipid carrier undecaprenyl phosphate, yielding undecaprenyl-pyrophosphoryl-MurNAc-pentapeptide, known as lipid I. This is Phospho-N-acetylmuramoyl-pentapeptide-transferase from Synechococcus sp. (strain JA-3-3Ab) (Cyanobacteria bacterium Yellowstone A-Prime).